The sequence spans 314 residues: Cytochrome f (314 aa).

Positions 1 to 29 (MTRSISISVLIISVLIMIYVITRTSISNA) are cleaved as a signal peptide. Heme is bound by residues Tyr-30, Cys-50, Cys-53, and His-54. Residues 280–300 (VQGLLFFLASVILAQIFLVLK) form a helical membrane-spanning segment.

Belongs to the cytochrome f family. In terms of assembly, the 4 large subunits of the cytochrome b6-f complex are cytochrome b6, subunit IV (17 kDa polypeptide, petD), cytochrome f and the Rieske protein, while the 4 small subunits are PetG, PetL, PetM and PetN. The complex functions as a dimer. Heme is required as a cofactor.

Its subcellular location is the plastid. It localises to the chloroplast thylakoid membrane. Functionally, component of the cytochrome b6-f complex, which mediates electron transfer between photosystem II (PSII) and photosystem I (PSI), cyclic electron flow around PSI, and state transitions. The protein is Cytochrome f of Illicium oligandrum (Star anise).